Here is a 918-residue protein sequence, read N- to C-terminus: Protein translocase subunit SecA (918 aa).

ATP-binding positions include Gln-87, 105 to 109 (GEGKT), and Asp-494. Over residues 863 to 883 (KQDDTSPKEYKKIGQEQRAEV) the composition is skewed to basic and acidic residues. A disordered region spans residues 863–918 (KQDDTSPKEYKKIGQEQRAEVDMFGNELKSNKTKPQVSSTTSSGGGSERRSSRRKK).

Belongs to the SecA family. Monomer and homodimer. Part of the essential Sec protein translocation apparatus which comprises SecA, SecYEG and auxiliary proteins SecDF. Other proteins may also be involved.

Its subcellular location is the cell inner membrane. The protein localises to the cytoplasm. It carries out the reaction ATP + H2O + cellular proteinSide 1 = ADP + phosphate + cellular proteinSide 2.. Functionally, part of the Sec protein translocase complex. Interacts with the SecYEG preprotein conducting channel. Has a central role in coupling the hydrolysis of ATP to the transfer of proteins into and across the cell membrane, serving as an ATP-driven molecular motor driving the stepwise translocation of polypeptide chains across the membrane. This chain is Protein translocase subunit SecA, found in Leptospira biflexa serovar Patoc (strain Patoc 1 / Ames).